A 447-amino-acid polypeptide reads, in one-letter code: Divalent metal cation transporter MntH (447 aa).

Helical transmembrane passes span 26–48, 65–85, 108–128, 140–160, 169–189, 212–232, 264–284, 304–324, 359–379, 383–403, and 426–446; these read AGFWKTLMAYSGPGFLIAVGYMD, TLLSVILLSSLIAMLLQAMSA, GFLLWIVAELAIMATDIAEII, IPLIIGILITAADVLILLLLM, AIVATLVAVILIVFAYEVLLS, MLYLSLGIVGATVMPHDLYLG, LFLAFIVNSLLLILGAALFYG, IVGAIASPVLSMLFAVALLAS, VLSVAPVLIFAIYYHGDEAKI, LTFSQVFLSVALPFAVIPLVI, and TATIVLILLNIYLILQTLGLI.

Belongs to the NRAMP family.

The protein localises to the cell membrane. Functionally, h(+)-stimulated, divalent metal cation uptake system. In Pediococcus pentosaceus (strain ATCC 25745 / CCUG 21536 / LMG 10740 / 183-1w), this protein is Divalent metal cation transporter MntH.